The sequence spans 78 residues: Small ribosomal subunit protein bS18 (78 aa).

It belongs to the bacterial ribosomal protein bS18 family. Part of the 30S ribosomal subunit. Forms a tight heterodimer with protein bS6.

Binds as a heterodimer with protein bS6 to the central domain of the 16S rRNA, where it helps stabilize the platform of the 30S subunit. The protein is Small ribosomal subunit protein bS18 of Geobacillus kaustophilus (strain HTA426).